Consider the following 127-residue polypeptide: Large ribosomal subunit protein bL17 (127 aa).

This sequence belongs to the bacterial ribosomal protein bL17 family. Part of the 50S ribosomal subunit. Contacts protein L32.

The chain is Large ribosomal subunit protein bL17 from Lacticaseibacillus casei (strain BL23) (Lactobacillus casei).